The following is a 368-amino-acid chain: 3-dehydroquinate synthase (368 aa).

NAD(+) is bound by residues 80–85, 114–118, 138–139, Lys-151, and Lys-160; these read DAESAK, GAATD, and TT. Zn(2+) is bound by residues Glu-193, His-255, and His-271.

It belongs to the sugar phosphate cyclases superfamily. Dehydroquinate synthase family. Requires Co(2+) as cofactor. It depends on Zn(2+) as a cofactor. NAD(+) is required as a cofactor.

It is found in the cytoplasm. It carries out the reaction 7-phospho-2-dehydro-3-deoxy-D-arabino-heptonate = 3-dehydroquinate + phosphate. It participates in metabolic intermediate biosynthesis; chorismate biosynthesis; chorismate from D-erythrose 4-phosphate and phosphoenolpyruvate: step 2/7. Its function is as follows. Catalyzes the conversion of 3-deoxy-D-arabino-heptulosonate 7-phosphate (DAHP) to dehydroquinate (DHQ). This chain is 3-dehydroquinate synthase, found in Corynebacterium jeikeium (strain K411).